Here is a 413-residue protein sequence, read N- to C-terminus: CCA-adding enzyme (413 aa).

ATP is bound by residues Ser42 and Lys45. Residues Ser42 and Lys45 each coordinate CTP. Asp54, Asp56, and Asp107 together coordinate Mg(2+). ATP is bound by residues His130, Lys150, and Tyr159. CTP-binding residues include His130, Lys150, and Tyr159.

This sequence belongs to the tRNA nucleotidyltransferase/poly(A) polymerase family. Archaeal CCA-adding enzyme subfamily. As to quaternary structure, homodimer. Requires Mg(2+) as cofactor.

The catalysed reaction is a tRNA precursor + 2 CTP + ATP = a tRNA with a 3' CCA end + 3 diphosphate. It catalyses the reaction a tRNA with a 3' CCA end + 2 CTP + ATP = a tRNA with a 3' CCACCA end + 3 diphosphate. Catalyzes the addition and repair of the essential 3'-terminal CCA sequence in tRNAs without using a nucleic acid template. Adds these three nucleotides in the order of C, C, and A to the tRNA nucleotide-73, using CTP and ATP as substrates and producing inorganic pyrophosphate. tRNA 3'-terminal CCA addition is required both for tRNA processing and repair. Also involved in tRNA surveillance by mediating tandem CCA addition to generate a CCACCA at the 3' terminus of unstable tRNAs. While stable tRNAs receive only 3'-terminal CCA, unstable tRNAs are marked with CCACCA and rapidly degraded. This is CCA-adding enzyme from Sulfurisphaera tokodaii (strain DSM 16993 / JCM 10545 / NBRC 100140 / 7) (Sulfolobus tokodaii).